Consider the following 324-residue polypeptide: Probable carboxylesterase 9 (324 aa).

Residues 86–88 (HGS) carry the Involved in the stabilization of the negatively charged intermediate by the formation of the oxyanion hole motif. Catalysis depends on residues S171, D272, and H302.

This sequence belongs to the 'GDXG' lipolytic enzyme family. As to expression, expressed in flowers.

It catalyses the reaction a carboxylic ester + H2O = an alcohol + a carboxylate + H(+). Its function is as follows. Carboxylesterase acting on esters with varying acyl chain length. The chain is Probable carboxylesterase 9 (CXE9) from Arabidopsis thaliana (Mouse-ear cress).